An 85-amino-acid polypeptide reads, in one-letter code: Large ribosomal subunit protein bL27 (85 aa).

Positions 1-10 are enriched in gly residues; that stretch reads MAQKKGGGST. Residues 1–20 form a disordered region; sequence MAQKKGGGSTRNGRDSKPKM.

It belongs to the bacterial ribosomal protein bL27 family.

This chain is Large ribosomal subunit protein bL27, found in Acidovorax ebreus (strain TPSY) (Diaphorobacter sp. (strain TPSY)).